We begin with the raw amino-acid sequence, 136 residues long: uncharacterized protein (136 aa).

2 consecutive transmembrane segments (helical) span residues 25 to 47 (ILKASILFLAIASFHLFSIPHAF) and 78 to 97 (ITGAFTLTALWAMAVLLLTA).

The protein localises to the cell membrane. This is an uncharacterized protein from Bacillus subtilis (strain 168).